Here is a 407-residue protein sequence, read N- to C-terminus: Acetate kinase (407 aa).

Residue asparagine 10 participates in Mg(2+) binding. Lysine 17 is a binding site for ATP. Arginine 93 is a binding site for substrate. The active-site Proton donor/acceptor is the aspartate 150. ATP-binding positions include 210–214, 284–286, and 332–336; these read HLGNG, DMR, and GVGEN. Residue glutamate 386 participates in Mg(2+) binding.

It belongs to the acetokinase family. As to quaternary structure, homodimer. Mg(2+) is required as a cofactor. The cofactor is Mn(2+).

It localises to the cytoplasm. The enzyme catalyses acetate + ATP = acetyl phosphate + ADP. The protein operates within metabolic intermediate biosynthesis; acetyl-CoA biosynthesis; acetyl-CoA from acetate: step 1/2. Its function is as follows. Catalyzes the formation of acetyl phosphate from acetate and ATP. Can also catalyze the reverse reaction. The protein is Acetate kinase of Streptomyces coelicolor (strain ATCC BAA-471 / A3(2) / M145).